The primary structure comprises 579 residues: Eukaryotic translation initiation factor 3 subunit D (579 aa).

3 disordered regions span residues 1-20 (MASF…GPAS), 51-72 (NASG…RARD), and 109-170 (RRGG…FGWK). Low complexity predominate over residues 51-64 (NASGASNDAANARG). A compositionally biased stretch (gly residues) spans 120-167 (GGRGGRGGAGGAGAAGGRGASKFGAGAGRGARGGRGGAAGARRGGGRF). An RNA gate region spans residues 307–321 (AFDYLTVNENAADPP).

Belongs to the eIF-3 subunit D family. As to quaternary structure, component of the eukaryotic translation initiation factor 3 (eIF-3) complex.

The protein resides in the cytoplasm. In terms of biological role, mRNA cap-binding component of the eukaryotic translation initiation factor 3 (eIF-3) complex, which is involved in protein synthesis of a specialized repertoire of mRNAs and, together with other initiation factors, stimulates binding of mRNA and methionyl-tRNAi to the 40S ribosome. The eIF-3 complex specifically targets and initiates translation of a subset of mRNAs involved in cell proliferation. In the eIF-3 complex, eif3d specifically recognizes and binds the 7-methylguanosine cap of a subset of mRNAs. The sequence is that of Eukaryotic translation initiation factor 3 subunit D from Mycosarcoma maydis (Corn smut fungus).